The primary structure comprises 335 residues: MITSQTPITVLGAGSYGTALAITFSRNGSPTHLWGHNPAHIAQMQTERQNYRFLPDVIFPEDLHLESNLAQAMEYSQDILIVVPSHAFGEILIKIKPHLKAHHRLIWATKGLERNTGRLLQTVVEEQLGTQYPLAVLSGPTFAKELAQGLPSAITLAANNEQFAREFQSRIHCSKGFRVYINSDMTGVQLGGAIKNVIAIGAGISDGMGFGANARTALITRGIAEITRLGISLGANTNTFMGMSGLGDLVLTCTDNQSRNRRFGLMLGKGLDAQMAMENIGQVVEGFYNTKEAYLLAQRQGVEMPITEQIYQMLFCGKSAQDVAISLLGRACKGE.

S15, Y16, H36, and K110 together coordinate NADPH. Sn-glycerol 3-phosphate-binding residues include K110, G139, and T141. A143 lines the NADPH pocket. The sn-glycerol 3-phosphate site is built by K195, D248, S258, R259, and N260. K195 (proton acceptor) is an active-site residue. Residue R259 participates in NADPH binding. Positions 283 and 285 each coordinate NADPH.

Belongs to the NAD-dependent glycerol-3-phosphate dehydrogenase family.

It localises to the cytoplasm. It catalyses the reaction sn-glycerol 3-phosphate + NAD(+) = dihydroxyacetone phosphate + NADH + H(+). The catalysed reaction is sn-glycerol 3-phosphate + NADP(+) = dihydroxyacetone phosphate + NADPH + H(+). It functions in the pathway membrane lipid metabolism; glycerophospholipid metabolism. In terms of biological role, catalyzes the reduction of the glycolytic intermediate dihydroxyacetone phosphate (DHAP) to sn-glycerol 3-phosphate (G3P), the key precursor for phospholipid synthesis. The sequence is that of Glycerol-3-phosphate dehydrogenase [NAD(P)+] from Haemophilus influenzae (strain ATCC 51907 / DSM 11121 / KW20 / Rd).